The following is a 261-amino-acid chain: Glandular kallikrein-7, submandibular/renal (261 aa).

The first 18 residues, 1-18, serve as a signal peptide directing secretion; that stretch reads MWFLILFLDLSLGQIDAA. The propeptide at 19–24 is activation peptide; sequence PPGQSR. The region spanning 25–258 is the Peptidase S1 domain; that stretch reads VIGGYKCEKN…FTSWIKEVMK (234 aa). 5 disulfide bridges follow: cysteine 31/cysteine 173, cysteine 50/cysteine 66, cysteine 152/cysteine 219, cysteine 184/cysteine 198, and cysteine 209/cysteine 234. Histidine 65 serves as the catalytic Charge relay system. Asparagine 108 carries an N-linked (GlcNAc...) asparagine glycan. The Charge relay system role is filled by aspartate 120. The Charge relay system role is filled by serine 213.

The protein belongs to the peptidase S1 family. Kallikrein subfamily. In terms of tissue distribution, kidney and submandibular gland. Not expressed in liver, pancreas, spleen, parotid, testis, cortex, prostate, ovary and pituitary.

It carries out the reaction Preferential cleavage of Arg-|-Xaa bonds in small molecule substrates. Highly selective action to release kallidin (lysyl-bradykinin) from kininogen involves hydrolysis of Met-|-Xaa or Leu-|-Xaa.. In terms of biological role, glandular kallikreins cleave Met-Lys and Arg-Ser bonds in kininogen to release Lys-bradykinin. Predominant kallikrein protein in the kidney. The polypeptide is Glandular kallikrein-7, submandibular/renal (Klk7) (Rattus norvegicus (Rat)).